Reading from the N-terminus, the 165-residue chain is Protein FAM219A (165 aa).

N-acetylmethionine is present on Met1. A disordered region spans residues 1-114 (MMEEIDRFQV…SRYSSSGYSS (114 aa)). Basic and acidic residues predominate over residues 32 to 44 (CDAREEKQRELAR). Residues 49 to 63 (KNGSMGSPVNQQPKK) are compositionally biased toward polar residues. 2 positions are modified to phosphoserine: Ser55 and Ser85. Thr96 bears the Phosphothreonine mark. Phosphoserine occurs at positions 98 and 105. Over residues 105 to 114 (SRYSSSGYSS) the composition is skewed to low complexity.

Belongs to the FAM219 family.

This Macaca fascicularis (Crab-eating macaque) protein is Protein FAM219A (FAM219A).